An 877-amino-acid chain; its full sequence is MKKLNSSEFRQMFLDFFAEHGHMVMQSASLIPKDDPTLLWINSGVATMKKYFDGSVVPKNRRITSSQKSIRTNDIENVGKTARHQTLFEMLGNFSVGDYFKEEAIPWAWEFLTSPDWLDLDKDKLYVTVYPKDTEAHRIWHEVVGLPESHIVQLEDNFWDIGEGPCGPDSEIFYDRGQENNDVPEDDPENYPGGENARYLEIWNIVFSEFNHLPDGSYVEQPHKNIDTGMGLERVLSILQDAPTNFETDLFLPIIHATEEMSAGKKYGANKADDISFKIIADHIRAISFAIGDGALPGNTGRGYVLRRLLRRAALNGRKLGIDGAFLYKLVPVVGDIMKSHYPEVSDQAEFISKVVKNEEDRFGATLEAGLTLLDDLIDKAENSEDKTISGKDAFKMFDTYGFPYELTVEAAEDKGLKVDKDGFDAEMEAQKERARKARGNLQSMGSQDETLMKIKDKSVFEYGVYEEESQLVDIIVDDKLVDKADGEKATLIFDKTPFYAERGGQVADHGDIYDQEGNLVARVVDVQHAPNDQNLHFVDVVLPLVKGQTYKLKIDRARREGLRHSHSATHLLHAALRQVLGEHTHQAGSVVEPDYLRFDFTSLDPITPRELKNVEKIVNEKIWEAIQVKTTETDPETGKKMGALALFDGKYTDKVRVVQMDDFSIEFCGGTHCDNTSQIGVFKIISEQAIGAGVRRIEAVTSKLAYEYLAGRSDILDQIQAQVKATKVDGIQSKIASLQEELRSAEKQNAAYEAQINASKAGKIFDQVKTVGDLTVIATIADVKGMNDLREIADQWKSEGKSDVLILGAKSEDKANMLISLGQKALDKGLKAGDLIKSVAAIFGGGGGGRPNMAQAGGKNPEGLQDAIDAAVSQLD.

Zn(2+)-binding residues include histidine 567, histidine 571, cysteine 669, and histidine 673.

It belongs to the class-II aminoacyl-tRNA synthetase family. The cofactor is Zn(2+).

Its subcellular location is the cytoplasm. It carries out the reaction tRNA(Ala) + L-alanine + ATP = L-alanyl-tRNA(Ala) + AMP + diphosphate. In terms of biological role, catalyzes the attachment of alanine to tRNA(Ala) in a two-step reaction: alanine is first activated by ATP to form Ala-AMP and then transferred to the acceptor end of tRNA(Ala). Also edits incorrectly charged Ser-tRNA(Ala) and Gly-tRNA(Ala) via its editing domain. This Lactobacillus delbrueckii subsp. bulgaricus (strain ATCC 11842 / DSM 20081 / BCRC 10696 / JCM 1002 / NBRC 13953 / NCIMB 11778 / NCTC 12712 / WDCM 00102 / Lb 14) protein is Alanine--tRNA ligase.